A 695-amino-acid chain; its full sequence is Follicle-stimulating hormone receptor (695 aa).

The signal sequence occupies residues 1-17; it reads MALLLVSLLAFMSLGSG. Disulfide bonds link Cys-18/Cys-25 and Cys-23/Cys-32. Positions 18–46 constitute an LRRNT domain; that stretch reads CHHRLCHCSNRVFLCQESKVTEIPSDLPR. The Extracellular portion of the chain corresponds to 18–366; sequence CHHRLCHCSN…EDIMGYNILR (349 aa). LRR repeat units lie at residues 49-72, 73-97, 98-118, 119-143, 144-169, 170-192, 193-216, 217-240, and 241-259; these read VELR…FGDL, EKIE…LPNL, HEIR…AFQN, LPNL…KIQS, LQKV…LGLS, SESV…AFNG, TQLD…VFQG, ASGP…GLEN, and LKKL…PSLE. N-linked (GlcNAc...) asparagine glycans are attached at residues Asn-191 and Asn-199. Cystine bridges form between Cys-275–Cys-346, Cys-276–Cys-292, Cys-276–Cys-356, and Cys-292–Cys-338. The N-linked (GlcNAc...) asparagine glycan is linked to Asn-293. Tyr-335 carries the post-translational modification Sulfotyrosine. A helical membrane pass occupies residues 367 to 387; the sequence is VLIWFISILAITGNVAVLVVL. Residues 388 to 398 lie on the Cytoplasmic side of the membrane; that stretch reads TTSQYKLTVPR. A helical membrane pass occupies residues 399-421; that stretch reads FLMCNLAFADLCIGIYLLLIASV. Residues 422–443 lie on the Extracellular side of the membrane; that stretch reads DVHTRTLYHNYAIDWQTGAGCA. Cys-442 and Cys-517 are disulfide-bonded. A helical transmembrane segment spans residues 444 to 465; it reads DCWLFTVFASELSVYTLTAITL. Residues 466–485 lie on the Cytoplasmic side of the membrane; the sequence is ERWHTITHAMQLDCKVQLRH. The chain crosses the membrane as a helical span at residues 486 to 508; that stretch reads AASIMVIGWIFSSAAALFPIFGV. The Extracellular portion of the chain corresponds to 509 to 528; it reads SSYMKVSICLPMDIDSPLSQ. A helical membrane pass occupies residues 529 to 550; the sequence is LYVMFLLVLNVLAFVVICGCYL. The Cytoplasmic portion of the chain corresponds to 551 to 573; it reads HIYLTVRNPNIVSSASDTRIAKR. A helical transmembrane segment spans residues 574–597; that stretch reads MATLIFTDFLCMAPISFFAISASL. The Extracellular portion of the chain corresponds to 598–608; the sequence is KVPLITVSKAK. A helical transmembrane segment spans residues 609 to 630; the sequence is ILLVLFYPINSCANPFLYAIFT. Topologically, residues 631–695 are cytoplasmic; sequence KNFRRDLFIL…LAPLNHLAQN (65 aa). The interval 658–677 is disordered; it reads TSSTAHNSHPRNGHSSSVSR.

It belongs to the G-protein coupled receptor 1 family. FSH/LSH/TSH subfamily. Homotrimer. Functions as a homotrimer binding the FSH hormone heterodimer composed of CGA and FSHB. Interacts with ARRB2. Interacts with APPL2; interaction is independent of follicle stimulating hormone stimulation. Post-translationally, N-glycosylated; indirectly required for FSH-binding, possibly via a conformational change that allows high affinity binding of hormone. In terms of processing, sulfated.

It is found in the cell membrane. Functionally, g protein-coupled receptor for follitropin, the follicle-stimulating hormone. Through cAMP production activates the downstream PI3K-AKT and ERK1/ERK2 signaling pathways. This Cavia porcellus (Guinea pig) protein is Follicle-stimulating hormone receptor (FSHR).